Here is a 699-residue protein sequence, read N- to C-terminus: MEVHELFRYFRMPELIDIRQYVRTLPTNTLMGFGAFAALTTFWYATRPKALKPPCDLSMQSVEIAGTTDGIRRSAVLEDDKLLVYYYDDVRTMYDGFQRGIQVSNNGPCLGSRKPNQPYEWISYKEVAELAECIGSGLIQKGFKPCSEQFIGLFSQNRPEWVIVEQGCFSYSMVVVPLYDTLGADAITYIVNKAELSVIFADKPEKAKLLLEGVENKLTPCLKIIVIMDSYGSDLVERGKKCGVEIISLKALEDLGRVNRVKPKPPEPEDLAIICFTSGTTGNPKGAMITHQNIINDCSGFIKATESAFIASTDDVLISFLPLAHMFETVVECVMLCHGAKIGFFQGDIRLLMDDLKVLQPTIFPVVPRLLNRMFDRIFGQANTSLKRWLLDFASKRKEAELRSGIVRNNSLWDKLIFHKIQSSLGGKVRLMITGAAPVSATVLTFLRTALGCQFYEGYGQTECTAGCCLSLPGDWTAGHVGAPMPCNYVKLVDVEEMNYLASKGEGEVCVKGANVFKGYLKDPARTAEALDKDGWLHTGDIGKWLPNGTLKIIDRKKHIFKLAQGEYIAPEKIENIYLRSEAVAQVFVHGESLQAFLIAVVVPDVESLPSWAQKRGLQGSFEELCRNKDINKAILDDLLKLGKEAGLKPFEQVKGIAVHPELFSIDNGLLTPTLKAKRPELRNYFRSQIDELYATIKI.

M1 is subject to N-acetylmethionine. 3'-nitrotyrosine is present on Y9. A helical; Signal-anchor for type III membrane protein transmembrane segment spans residues 25-45 (LPTNTLMGFGAFAALTTFWYA). Residues 46 to 699 (TRPKALKPPC…IDELYATIKI (654 aa)) are Cytoplasmic-facing. At Y85 the chain carries Phosphotyrosine. At Y86 the chain carries 3'-nitrotyrosine. O-linked (GlcNAc) serine glycosylation occurs at S136. N6-acetyllysine occurs at positions 208, 357, and 387. S621 is subject to Phosphoserine. N6-acetyllysine is present on K633.

Belongs to the ATP-dependent AMP-binding enzyme family. Requires Mg(2+) as cofactor.

The protein localises to the mitochondrion outer membrane. The protein resides in the peroxisome membrane. It localises to the microsome membrane. It is found in the endoplasmic reticulum membrane. The enzyme catalyses a long-chain fatty acid + ATP + CoA = a long-chain fatty acyl-CoA + AMP + diphosphate. The catalysed reaction is (5Z,8Z,11Z,14Z)-eicosatetraenoate + ATP + CoA = (5Z,8Z,11Z,14Z)-eicosatetraenoyl-CoA + AMP + diphosphate. It carries out the reaction 3,7,11,15-tetramethylhexadecanoate + ATP + CoA = phytanoyl-CoA + AMP + diphosphate. It catalyses the reaction hexadecanoate + ATP + CoA = hexadecanoyl-CoA + AMP + diphosphate. The enzyme catalyses (E)-hexadec-2-enoate + ATP + CoA = (2E)-hexadecenoyl-CoA + AMP + diphosphate. The catalysed reaction is 2,6,10,14-tetramethylpentadecanoate + ATP + CoA = pristanoyl-CoA + AMP + diphosphate. It carries out the reaction 14,15-epoxy-(5Z,8Z,11Z)-eicosatrienoate + ATP + CoA = 14,15-epoxy-(5Z,8Z,11Z)-eicosatrienoyl-CoA + AMP + diphosphate. It catalyses the reaction 5-hydroxy-(6E,8Z,11Z,14Z)-eicosatetraenoate + ATP + CoA = 5-hydroxy-(6E,8Z,11Z,14Z)-eicosatetraenoyl-CoA + AMP + diphosphate. The enzyme catalyses 12-hydroxy-(5Z,8Z,10E,14Z)-eicosatetraenoate + ATP + CoA = 12-hydroxy-(5Z,8Z,10E,14Z)-eicosatetraenoyl-CoA + AMP + diphosphate. The catalysed reaction is 15-hydroxy-(5Z,8Z,11Z,13E)-eicosatetraenoate + ATP + CoA = 15-hydroxy-(5Z,8Z,11Z,13E)-eicosatetraenoyl-CoA + AMP + diphosphate. It carries out the reaction (9Z)-octadecenoate + ATP + CoA = (9Z)-octadecenoyl-CoA + AMP + diphosphate. With respect to regulation, inhibited at high temperature and by arachidonate. Catalyzes the conversion of long-chain fatty acids to their active form acyl-CoAs for both synthesis of cellular lipids, and degradation via beta-oxidation. Preferentially uses palmitoleate, oleate and linoleate. Preferentially activates arachidonate than epoxyeicosatrienoic acids (EETs) or hydroxyeicosatrienoic acids (HETEs). The chain is Long-chain-fatty-acid--CoA ligase 1 from Mus musculus (Mouse).